The sequence spans 183 residues: Acyl-homoserine-lactone synthase (183 aa).

Belongs to the autoinducer synthase family.

The catalysed reaction is a fatty acyl-[ACP] + S-adenosyl-L-methionine = an N-acyl-L-homoserine lactone + S-methyl-5'-thioadenosine + holo-[ACP] + H(+). Involved in the synthesis of the acyl-homoserine lactone (AHL) signal N-(3-hydroxydodecanoyl)-L-HSL (3-hydroxy-C(12)-HSL or OH-dDHL). Probably part of a quorum-sensing system with AnoR. The protein is Acyl-homoserine-lactone synthase of Acinetobacter nosocomialis.